The following is a 323-amino-acid chain: tRNA N6-adenosine threonylcarbamoyltransferase (323 aa).

Fe cation contacts are provided by His-105, His-109, and Tyr-126. Residues 126-130 (YVSGG), Asp-158, Gly-171, Glu-175, and Asn-255 each bind substrate. Residue Asp-283 coordinates Fe cation.

The protein belongs to the KAE1 / TsaD family. Monomer. Component of the KEOPS complex that consists of Kae1, Bud32, Cgi121 and Pcc1; the whole complex dimerizes. Fe(2+) is required as a cofactor.

It is found in the cytoplasm. It catalyses the reaction L-threonylcarbamoyladenylate + adenosine(37) in tRNA = N(6)-L-threonylcarbamoyladenosine(37) in tRNA + AMP + H(+). In terms of biological role, required for the formation of a threonylcarbamoyl group on adenosine at position 37 (t(6)A37) in tRNAs that read codons beginning with adenine. Is a component of the KEOPS complex that is probably involved in the transfer of the threonylcarbamoyl moiety of threonylcarbamoyl-AMP (TC-AMP) to the N6 group of A37. Kae1 likely plays a direct catalytic role in this reaction, but requires other protein(s) of the complex to fulfill this activity. The chain is tRNA N6-adenosine threonylcarbamoyltransferase from Archaeoglobus fulgidus (strain ATCC 49558 / DSM 4304 / JCM 9628 / NBRC 100126 / VC-16).